The following is a 126-amino-acid chain: Small ribosomal subunit protein uS13 (126 aa).

Positions 92–126 (HRRGLPVRGQRTKTNARTRKGPKKTVAGKKKATRK) are disordered.

This sequence belongs to the universal ribosomal protein uS13 family. Part of the 30S ribosomal subunit. Forms a loose heterodimer with protein S19. Forms two bridges to the 50S subunit in the 70S ribosome.

In terms of biological role, located at the top of the head of the 30S subunit, it contacts several helices of the 16S rRNA. In the 70S ribosome it contacts the 23S rRNA (bridge B1a) and protein L5 of the 50S subunit (bridge B1b), connecting the 2 subunits; these bridges are implicated in subunit movement. Contacts the tRNAs in the A and P-sites. The chain is Small ribosomal subunit protein uS13 from Deinococcus radiodurans (strain ATCC 13939 / DSM 20539 / JCM 16871 / CCUG 27074 / LMG 4051 / NBRC 15346 / NCIMB 9279 / VKM B-1422 / R1).